A 1551-amino-acid chain; its full sequence is Pentafunctional AROM polypeptide (1551 aa).

The tract at residues 1-379 is 3-dehydroquinate synthase; that stretch reads MSIEKVPILG…YQLKAHEVSK (379 aa). Residues 42–44, 80–83, 111–113, and D116 each bind NAD(+); these read DTN, ENNK, and GGV. R127 contacts 7-phospho-2-dehydro-3-deoxy-D-arabino-heptonate. 136–137 is a binding site for NAD(+); that stretch reads TT. The 7-phospho-2-dehydro-3-deoxy-D-arabino-heptonate site is built by D143 and K149. K158 is a binding site for NAD(+). N159 contributes to the 7-phospho-2-dehydro-3-deoxy-D-arabino-heptonate binding site. NAD(+)-binding positions include 176 to 179 and N187; that span reads YLES. Residue E191 participates in Zn(2+) binding. 7-phospho-2-dehydro-3-deoxy-D-arabino-heptonate is bound by residues 191–194 and K243; that span reads EVVK. The active-site Proton acceptor; for 3-dehydroquinate synthase activity is the E253. 7-phospho-2-dehydro-3-deoxy-D-arabino-heptonate-binding positions include 257-261 and H264; that span reads RNLLN. H264 contributes to the Zn(2+) binding site. H268 (proton acceptor; for 3-dehydroquinate synthase activity) is an active-site residue. The 7-phospho-2-dehydro-3-deoxy-D-arabino-heptonate site is built by H280 and K351. H280 serves as a coordination point for Zn(2+). The EPSP synthase stretch occupies residues 392 to 838; the sequence is VHPFKQPPQE…WDILHSKFNI (447 aa). Positions 858-1048 are shikimate kinase; that stretch reads DKSIIIIGMR…IPSGRSAALS (191 aa). An ATP-binding site is contributed by 865–872; it reads GMRGTGKS. A 3-dehydroquinase region spans residues 1049 to 1258; the sequence is LTVPDLNAIS…NEDGLLTIKE (210 aa). K1194 acts as the Schiff-base intermediate with substrate; for 3-dehydroquinate dehydratase activity in catalysis. The shikimate dehydrogenase stretch occupies residues 1271-1551; it reads AKKFWVIGSP…DVIHRAVVEE (281 aa).

In the N-terminal section; belongs to the sugar phosphate cyclases superfamily. Dehydroquinate synthase family. The protein in the 2nd section; belongs to the EPSP synthase family. This sequence in the 3rd section; belongs to the shikimate kinase family. It in the 4th section; belongs to the type-I 3-dehydroquinase family. In the C-terminal section; belongs to the shikimate dehydrogenase family. Homodimer. Zn(2+) serves as cofactor.

The protein resides in the cytoplasm. It catalyses the reaction 7-phospho-2-dehydro-3-deoxy-D-arabino-heptonate = 3-dehydroquinate + phosphate. The catalysed reaction is 3-dehydroquinate = 3-dehydroshikimate + H2O. The enzyme catalyses shikimate + NADP(+) = 3-dehydroshikimate + NADPH + H(+). It carries out the reaction shikimate + ATP = 3-phosphoshikimate + ADP + H(+). It catalyses the reaction 3-phosphoshikimate + phosphoenolpyruvate = 5-O-(1-carboxyvinyl)-3-phosphoshikimate + phosphate. It participates in metabolic intermediate biosynthesis; chorismate biosynthesis; chorismate from D-erythrose 4-phosphate and phosphoenolpyruvate: step 2/7. Its pathway is metabolic intermediate biosynthesis; chorismate biosynthesis; chorismate from D-erythrose 4-phosphate and phosphoenolpyruvate: step 3/7. The protein operates within metabolic intermediate biosynthesis; chorismate biosynthesis; chorismate from D-erythrose 4-phosphate and phosphoenolpyruvate: step 4/7. It functions in the pathway metabolic intermediate biosynthesis; chorismate biosynthesis; chorismate from D-erythrose 4-phosphate and phosphoenolpyruvate: step 5/7. It participates in metabolic intermediate biosynthesis; chorismate biosynthesis; chorismate from D-erythrose 4-phosphate and phosphoenolpyruvate: step 6/7. In terms of biological role, the AROM polypeptide catalyzes 5 consecutive enzymatic reactions in prechorismate polyaromatic amino acid biosynthesis. This chain is Pentafunctional AROM polypeptide, found in Candida tropicalis (strain ATCC MYA-3404 / T1) (Yeast).